Here is a 393-residue protein sequence, read N- to C-terminus: Probable acetyl-CoA acyltransferase (393 aa).

Cysteine 88 serves as the catalytic Acyl-thioester intermediate. Residues histidine 349 and cysteine 378 each act as proton acceptor in the active site.

This sequence belongs to the thiolase-like superfamily. Thiolase family.

The protein localises to the cytoplasm. It catalyses the reaction 2 acetyl-CoA = acetoacetyl-CoA + CoA. The sequence is that of Probable acetyl-CoA acyltransferase from Staphylococcus aureus (strain MRSA252).